Consider the following 356-residue polypeptide: Peptide chain release factor 1 (356 aa).

Position 233 is an N5-methylglutamine (Q233).

This sequence belongs to the prokaryotic/mitochondrial release factor family. Methylated by PrmC. Methylation increases the termination efficiency of RF1.

It is found in the cytoplasm. Functionally, peptide chain release factor 1 directs the termination of translation in response to the peptide chain termination codons UAG and UAA. The chain is Peptide chain release factor 1 from Halalkalibacterium halodurans (strain ATCC BAA-125 / DSM 18197 / FERM 7344 / JCM 9153 / C-125) (Bacillus halodurans).